The sequence spans 1090 residues: UPF0507 protein SCY_4172 (1090 aa).

A VPS9 domain is found at F289 to N436.

It belongs to the UPF0507 family.

The protein is UPF0507 protein SCY_4172 of Saccharomyces cerevisiae (strain YJM789) (Baker's yeast).